We begin with the raw amino-acid sequence, 511 residues long: BAR/IMD domain-containing adapter protein 2-like 1 (511 aa).

One can recognise an IMD domain in the interval 1 to 249 (MSRGPEEVNR…MNMIEEIKTP (249 aa)). Positions 115–154 (MNATLKRYQTEHKNKLESLEKSQAELKKIRRKSQGSRNAL) form a coiled coil. Phosphothreonine occurs at positions 248 and 257. Residues S261 and S281 each carry the phosphoserine modification. The tract at residues 302–328 (NNPATAAPNSQRVNNSTGTSEDPSLQR) is disordered. A compositionally biased stretch (polar residues) spans 303-328 (NPATAAPNSQRVNNSTGTSEDPSLQR). 2 positions are modified to phosphoserine: S331 and S354. Residues 339–402 (MKKQKVKTIF…PSSYTKLLEE (64 aa)) enclose the SH3 domain. T412 is modified (phosphothreonine). S414, S420, and S422 each carry phosphoserine. Residues 451-511 (RRADSARTTS…TNDRSAPIIR (61 aa)) form a disordered region. The binds F-actin stretch occupies residues 483 to 511 (PPFLSGENPFATVKLRPTVTNDRSAPIIR).

Interacts with RAC1. Binds to F-actin. Interacts with FASLG. Interacts (via SH3 domain) with E.coli effector protein EspF(U) (via PXXP motifs). Identified in a complex containing at least WASL, BAIAP2L1 and E.coli EspF(U). Interacts with E.coli intimin receptor Tir. Post-translationally, phosphorylated on tyrosine in response to insulin.

The protein resides in the cytoplasm. The protein localises to the cytoskeleton. Functionally, may function as adapter protein. Involved in the formation of clusters of actin bundles. Plays a role in the reorganization of the actin cytoskeleton in response to bacterial infection. The polypeptide is BAR/IMD domain-containing adapter protein 2-like 1 (BAIAP2L1) (Homo sapiens (Human)).